The sequence spans 141 residues: MKTARRRSRELAVQAVYQSLINRTAAPEIAKNIREMSDFAKADEELFNKLFFGTQTNAAEYIRQIRPLLDRDEKDLNPIERAVLLTACHELSAMPETPYPVIINEAIEVTKTFGGTDGHKFVNGILDKLAAQIRPDEPKRR.

The protein belongs to the NusB family.

Its function is as follows. Involved in transcription antitermination. Required for transcription of ribosomal RNA (rRNA) genes. Binds specifically to the boxA antiterminator sequence of the ribosomal RNA (rrn) operons. The protein is Transcription antitermination protein NusB of Neisseria meningitidis serogroup B (strain ATCC BAA-335 / MC58).